The chain runs to 199 residues: Ribosomal RNA large subunit methyltransferase E (199 aa).

Positions 53, 55, 73, 92, and 114 each coordinate S-adenosyl-L-methionine. K154 acts as the Proton acceptor in catalysis.

The protein belongs to the class I-like SAM-binding methyltransferase superfamily. RNA methyltransferase RlmE family.

Its subcellular location is the cytoplasm. It catalyses the reaction uridine(2552) in 23S rRNA + S-adenosyl-L-methionine = 2'-O-methyluridine(2552) in 23S rRNA + S-adenosyl-L-homocysteine + H(+). Specifically methylates the uridine in position 2552 of 23S rRNA at the 2'-O position of the ribose in the fully assembled 50S ribosomal subunit. The chain is Ribosomal RNA large subunit methyltransferase E from Treponema denticola (strain ATCC 35405 / DSM 14222 / CIP 103919 / JCM 8153 / KCTC 15104).